The sequence spans 317 residues: Melanocyte-stimulating hormone receptor (317 aa).

Topologically, residues Met-1 to Glu-37 are extracellular. A glycan (N-linked (GlcNAc...) asparagine) is linked at Asn-29. A helical membrane pass occupies residues Val-38–Ile-63. Residues Ala-64–Pro-72 lie on the Cytoplasmic side of the membrane. A helical transmembrane segment spans residues Met-73–Leu-93. Topologically, residues Glu-94 to Asn-118 are extracellular. Residues Val-119–Val-140 traverse the membrane as a helical segment. Over Asp-141–Arg-163 the chain is Cytoplasmic. A helical membrane pass occupies residues Ile-164–Tyr-183. Residues Asn-184–Cys-191 lie on the Extracellular side of the membrane. A helical transmembrane segment spans residues Leu-192 to Leu-211. The Cytoplasmic portion of the chain corresponds to Ala-212–Ala-240. A helical transmembrane segment spans residues Ala-241–Leu-266. Over Cys-267–Asn-279 the chain is Extracellular. The chain crosses the membrane as a helical span at residues Phe-280–Phe-300. Topologically, residues Arg-301 to Trp-317 are cytoplasmic. Residue Cys-315 is the site of S-palmitoyl cysteine attachment.

This sequence belongs to the G-protein coupled receptor 1 family. Interacts with MGRN1, but does not undergo MGRN1-mediated ubiquitination; this interaction competes with GNAS-binding and thus inhibits agonist-induced cAMP production. Interacts with OPN3; the interaction results in a decrease in MC1R-mediated cAMP signaling and ultimately a decrease in melanin production in melanocytes. As to expression, highly expressed in the testis.

It is found in the cell membrane. In terms of biological role, receptor for MSH (alpha, beta) and ACTH. Does not seem to be active with gamma-MSH. The activity of this receptor is mediated by G proteins which activate adenylate cyclase. Mediates melanogenesis, the production of eumelanin (black/brown) and phaeomelanin (red/yellow), via regulation of cAMP signaling in melanocytes. This chain is Melanocyte-stimulating hormone receptor (MC1R), found in Bos taurus (Bovine).